The primary structure comprises 730 residues: Synaptogenesis protein syg-1 (730 aa).

The signal sequence occupies residues 1–18; the sequence is MVRWQTWPLLLLFQLVTC. Residues 19–551 are Extracellular-facing; that stretch reads QQLQQRIVEA…WIVITAKFDR (533 aa). 5 Ig-like domains span residues 23-123, 131-265, 270-352, 357-433, and 441-540; these read QRIV…AKLT, PKIV…VKLS, PQIN…IKLN, ARIM…QILS, and PPTV…RNIL. 5 disulfide bridges follow: C44–C104, C152–C246, C292–C336, C378–C420, and C462–C519. 2 N-linked (GlcNAc...) asparagine glycosylation sites follow: N93 and N206. Residues 552–572 traverse the membrane as a helical segment; that stretch reads MVALAIISAGVLLVSLLCCLC. The Cytoplasmic segment spans residues 573–730; sequence MCRSNCRSRK…RPISRTSTHV (158 aa).

This sequence belongs to the immunoglobulin superfamily. Interacts with skr-1. Interacts with syg-2. Interacts with the WAVE regulatory complex; the interaction leads to formation of a synaptic F-actin network that is required for synapse formation and axon branching. As to expression, expression in head motor neurons, occasionally in HSN neurons and weakly in other cells in the vulval region. Expressed in the primary synapse region of HSNL motor neuron.

The protein resides in the cell membrane. Its subcellular location is the cell projection. The protein localises to the axon. It localises to the synapse. Its function is as follows. Cell adhesion protein. Involved in synapse formation in the HSNL egg-laying motor neuron. Inhibits assembly of the SCF(sel-10) E3 ubiquitin ligase complex at synapses, and protects them from elimination. Also required for F-actin assembly at the synaptic region and for axon branch formation. The protein is Synaptogenesis protein syg-1 of Caenorhabditis elegans.